The primary structure comprises 172 residues: Large ribosomal subunit protein uL10 (172 aa).

The protein belongs to the universal ribosomal protein uL10 family. Part of the ribosomal stalk of the 50S ribosomal subunit. The N-terminus interacts with L11 and the large rRNA to form the base of the stalk. The C-terminus forms an elongated spine to which L12 dimers bind in a sequential fashion forming a multimeric L10(L12)X complex.

Forms part of the ribosomal stalk, playing a central role in the interaction of the ribosome with GTP-bound translation factors. The polypeptide is Large ribosomal subunit protein uL10 (Chlorobium phaeobacteroides (strain DSM 266 / SMG 266 / 2430)).